We begin with the raw amino-acid sequence, 361 residues long: Plasmid recombination enzyme (361 aa).

Positions 44 and 114 each coordinate DNA. The tract at residues 331–361 (RAGLKEPSKKAPESSQELDRHKSDELGGPHL) is disordered.

It belongs to the plasmid mobilization pre family.

The interaction of the RSA site and the pre protein may not only serve a function in plasmid maintenance, but also contribute to the distribution of small antibiotic resistance plasmids among Gram-positive bacteria. The polypeptide is Plasmid recombination enzyme (preA) (Lactiplantibacillus plantarum (Lactobacillus plantarum)).